Here is a 186-residue protein sequence, read N- to C-terminus: MKAGALELGEGSKTSIPRGGVNRGISILDFILRLITIIGTLGSAIAMGTTNETLPFFTQFTQFRAEYDDLPTFTFFVIANSIVSGYLVLSLPMSILHIVRSGARASRIVLIFFDTAMLALLTAAASAASAIVYLAHKGNAQANWFAICQQFKSFCERISGSLIGSFGGIILFILLVLLSAVALSRC.

Over 1 to 26 (MKAGALELGEGSKTSIPRGGVNRGIS) the chain is Cytoplasmic. A helical transmembrane segment spans residues 27 to 47 (ILDFILRLITIIGTLGSAIAM). Over 48-74 (GTTNETLPFFTQFTQFRAEYDDLPTFT) the chain is Extracellular. Asn51 carries an N-linked (GlcNAc...) asparagine glycan. Residues 75 to 95 (FFVIANSIVSGYLVLSLPMSI) form a helical membrane-spanning segment. Topologically, residues 96 to 107 (LHIVRSGARASR) are cytoplasmic. A helical transmembrane segment spans residues 108 to 128 (IVLIFFDTAMLALLTAAASAA). The Extracellular portion of the chain corresponds to 129–161 (SAIVYLAHKGNAQANWFAICQQFKSFCERISGS). A helical membrane pass occupies residues 162-182 (LIGSFGGIILFILLVLLSAVA). Residues 183–186 (LSRC) are Cytoplasmic-facing.

The protein belongs to the Casparian strip membrane proteins (CASP) family. Homodimer and heterodimers.

The protein resides in the cell membrane. In terms of biological role, regulates membrane-cell wall junctions and localized cell wall deposition. Required for establishment of the Casparian strip membrane domain (CSD) and the subsequent formation of Casparian strips, a cell wall modification of the root endodermis that determines an apoplastic barrier between the intraorganismal apoplasm and the extraorganismal apoplasm and prevents lateral diffusion. The chain is Casparian strip membrane protein 3 from Vitis vinifera (Grape).